A 470-amino-acid polypeptide reads, in one-letter code: Pancreatic lipase-related protein 2 (470 aa).

The N-terminal stretch at 1–18 (MMLFVWTTGLLLLATARG) is a signal peptide. A disulfide bond links cysteine 22 and cysteine 28. The segment at 94 to 106 (IHGFIDNGEKDWL) is required for galactolipase activity. An intrachain disulfide couples cysteine 110 to cysteine 121. Serine 172 (nucleophile) is an active-site residue. The active-site Charge relay system is aspartate 196. Ca(2+) is bound by residues glutamate 207, arginine 210, aspartate 212, and aspartate 215. Residues cysteine 257 and cysteine 281 are joined by a disulfide bond. The interval 258-280 (EKNIISTIVDVNGFLEGITSLAA) is required for galactolipase activity. Catalysis depends on histidine 283, which acts as the Charge relay system. 2 cysteine pairs are disulfide-bonded: cysteine 305–cysteine 316 and cysteine 319–cysteine 324. N-linked (GlcNAc...) asparagine glycans are attached at residues asparagine 354 and asparagine 429. One can recognise a PLAT domain in the interval 358–470 (WRYKVSVTLS…EDVLQSLSPC (113 aa)). Cysteine 454 and cysteine 470 form a disulfide bridge.

This sequence belongs to the AB hydrolase superfamily. Lipase family. As to expression, pancreas.

The protein resides in the secreted. The protein localises to the zymogen granule membrane. It localises to the cell projection. It is found in the neuron projection. It carries out the reaction a triacylglycerol + H2O = a diacylglycerol + a fatty acid + H(+). The enzyme catalyses a 1,2-diacyl-3-O-(beta-D-galactosyl)-sn-glycerol + 2 H2O = 3-beta-D-galactosyl-sn-glycerol + 2 a fatty acid + 2 H(+). It catalyses the reaction 1,2,3-tri-(9Z-octadecenoyl)-glycerol + H2O = di-(9Z)-octadecenoylglycerol + (9Z)-octadecenoate + H(+). The catalysed reaction is di-(9Z)-octadecenoylglycerol + H2O = (9Z-octadecenoyl)-glycerol + (9Z)-octadecenoate + H(+). It carries out the reaction (9Z-octadecenoyl)-glycerol + H2O = glycerol + (9Z)-octadecenoate + H(+). The enzyme catalyses 1-(9Z-octadecenoyl)-glycerol + H2O = glycerol + (9Z)-octadecenoate + H(+). It catalyses the reaction 1,2,3-tripropanoylglycerol + H2O = dipropanoylglycerol + propanoate + H(+). The catalysed reaction is 1,2,3-tributanoylglycerol + H2O = dibutanoylglycerol + butanoate + H(+). It carries out the reaction 1,2,3-trioctanoylglycerol + H2O = dioctanoylglycerol + octanoate + H(+). The enzyme catalyses 1,2-didecanoylglycerol + H2O = decanoylglycerol + decanoate + H(+). It catalyses the reaction long chain 1,2-diacyl-3-O-beta-D-galactosyl-sn-glycerol + H2O = long chain acyl-3-O-beta-D-galactosyl-sn-glycerol + a fatty acid + H(+). The catalysed reaction is 1,2-dioctanoyl-3-O-beta-D-galactosyl-sn-glycerol + H2O = octanoyl-3-(beta-D-galactosyl)-sn-glycerol + octanoate + H(+). It carries out the reaction 1,2-didodecanoyl-3-beta-D-galactosyl-sn-glycerol + H2O = dodecanoyl-3-beta-D-galactosyl-sn-glycerol + dodecanoate + H(+). The enzyme catalyses 1-beta-D-galactosyl-2,3-didodecanoyl-sn-glycerol + H2O = 1-beta-D-galactosyl-dodecanoyl-sn-glycerol + dodecanoate + H(+). It catalyses the reaction a 1,2-diacyl-3-O-[alpha-D-galactosyl-(1-&gt;6)-beta-D-galactosyl]-sn-glycerol + H2O = acyl-3-O-[alpha-D-galactosyl-(1-&gt;6)-beta-D-galactosyl]-sn-glycerol + a fatty acid + H(+). The catalysed reaction is long chain 1,2-diacyl-3-O-[alpha-D-galactosyl-(1-&gt;6)-beta-D-galactosyl]-sn-glycerol + H2O = long chain acyl-3-O-[alpha-D-galactosyl-(1-&gt;6)-beta-D-galactosyl]-sn-glycerol + a fatty acid + H(+). It carries out the reaction 1,2-dioctanoyl-3-O-[alpha-D-galactosyl-(1-&gt;6)-beta-D-galactosyl]-sn-glycerol + H2O = octanoyl-3-O-[alpha-D-galactosyl-(1-&gt;6)-beta-D-galactosyl]-sn-glycerol + octanoate + H(+). The enzyme catalyses 1,2-didodecanoyl-3-O-[alpha-D-galactosyl-(1-&gt;6)-beta-D-galactosyl]-sn-glycerol + H2O = dodecanoyl-3-O-[alpha-D-galactosyl-(1-&gt;6)-beta-D-galactosyl]-sn-glycerol + dodecanoate + H(+). It catalyses the reaction a 1,2-diacyl-sn-glycero-3-phosphocholine + H2O = a monoacyl-sn-glycero-3-phosphocholine + a fatty acid + H(+). It functions in the pathway glycerolipid metabolism; triacylglycerol degradation. Its pathway is glycolipid metabolism. With respect to regulation, triacylglycerol lipase activity is inhibited by increasing bile salts concentrations and not reactivated by CLPS. Functionally, lipase that primarily hydrolyzes triglycerides and galactosylglycerides. In neonates, may play a major role in pancreatic digestion of dietary fats such as milk fat globules enriched in long-chain triglycerides. Hydrolyzes short-, medium- and long-chain fatty acyls in triglycerides without apparent positional specificity. Can completely deacylate triacylglycerols. When the liver matures and bile salt synthesis increases, likely functions mainly as a galactolipase and monoacylglycerol lipase. Hydrolyzes monogalactosyldiglycerols (MGDG) and digalactosyldiacylglycerols (DGDG) present in a plant-based diet, releasing long-chain polyunsaturated fatty acids. Hydrolyzes medium- and long-chain fatty acyls in galactolipids. May act together with LIPF to hydrolyze partially digested triglycerides. Hydrolyzes long-chain monoglycerides with high efficiency. In cytotoxic T cells, contributes to perforin-dependent cell lysis, but is unlikely to mediate direct cytotoxicity. Also has low phospholipase activity. In neurons, required for the localization of the phospholipid 1-oleoyl-2-palmitoyl-PC (OPPC) to neurite tips through acyl chain remodeling of membrane phospholipids. The resulting OPPC-rich lipid membrane domain recruits the t-SNARE protein STX4 by selectively interacting with the STX4 transmembrane domain and this promotes surface expression of the dopamine transporter SLC6A3/DAT at neurite tips by facilitating fusion of SLC6A3-containing transport vesicles with the plasma membrane. This chain is Pancreatic lipase-related protein 2, found in Myocastor coypus (Coypu).